The sequence spans 208 residues: Large ribosomal subunit protein uL3 (208 aa).

It belongs to the universal ribosomal protein uL3 family. As to quaternary structure, part of the 50S ribosomal subunit. Forms a cluster with proteins L14 and L19.

Its function is as follows. One of the primary rRNA binding proteins, it binds directly near the 3'-end of the 23S rRNA, where it nucleates assembly of the 50S subunit. The protein is Large ribosomal subunit protein uL3 of Desulfosudis oleivorans (strain DSM 6200 / JCM 39069 / Hxd3) (Desulfococcus oleovorans).